The primary structure comprises 309 residues: MRKIIVGSRKSKLALTQTNWFIDQLKALGLPYEFEVKEIVTKGDVILDVTLSKVGGKGLFVKEIEHALLTKEIDMAVHSMKDMPAVLPEGLMIGCTPKRVDPRDAFISKSGASYKELAEGAILGTSSLRRSAQLLAARPDLQVKWIRGNIDTRLRKLKEEDYDAIILATAGLQRMGWDNEVITEHLDETLCVPAVGQGALAIECREDDKDLLQLLAHINDAVTEKTVAAERVFLHKLEGGCQVPIAGYATITENDAIELTALVGSMDGSVLLKETVVGTDPEKVGLEAADRLIKQGAKELILAANKGQQ.

Cysteine 241 carries the post-translational modification S-(dipyrrolylmethanemethyl)cysteine.

Belongs to the HMBS family. As to quaternary structure, monomer. It depends on dipyrromethane as a cofactor.

It carries out the reaction 4 porphobilinogen + H2O = hydroxymethylbilane + 4 NH4(+). The protein operates within porphyrin-containing compound metabolism; protoporphyrin-IX biosynthesis; coproporphyrinogen-III from 5-aminolevulinate: step 2/4. Its function is as follows. Tetrapolymerization of the monopyrrole PBG into the hydroxymethylbilane pre-uroporphyrinogen in several discrete steps. In Bacillus anthracis (strain A0248), this protein is Porphobilinogen deaminase.